We begin with the raw amino-acid sequence, 123 residues long: Small ribosomal subunit protein uS12 (123 aa).

The segment at M1–P28 is disordered. A 3-methylthioaspartic acid modification is found at D89.

It belongs to the universal ribosomal protein uS12 family. As to quaternary structure, part of the 30S ribosomal subunit. Contacts proteins S8 and S17. May interact with IF1 in the 30S initiation complex.

Functionally, with S4 and S5 plays an important role in translational accuracy. In terms of biological role, interacts with and stabilizes bases of the 16S rRNA that are involved in tRNA selection in the A site and with the mRNA backbone. Located at the interface of the 30S and 50S subunits, it traverses the body of the 30S subunit contacting proteins on the other side and probably holding the rRNA structure together. The combined cluster of proteins S8, S12 and S17 appears to hold together the shoulder and platform of the 30S subunit. In Cereibacter sphaeroides (strain ATCC 17029 / ATH 2.4.9) (Rhodobacter sphaeroides), this protein is Small ribosomal subunit protein uS12.